The sequence spans 498 residues: Diacylglycerol O-acyltransferase 1 (498 aa).

A disordered region spans residues 1-66 (MGDRGGAGSS…AHTRDKDGRT (66 aa)). The Cytoplasmic segment spans residues 1-92 (MGDRGGAGSS…SLFSSDSGFS (92 aa)). The segment at 1 to 100 (MGDRGGAGSS…FSNYRGILNW (100 aa)) is involved in homomerization. Ser-20 is subject to Phosphoserine. Residues 93–127 (NYRGILNWCVVMLILSNARLFLENLIKYGILVDPI) traverse the membrane as a helical segment. Residues 128–139 (QVVSLFLKDPYS) are Lumenal-facing. The interval 128–139 (QVVSLFLKDPYS) is extracellular loop 1 (EL1). The chain crosses the membrane as a helical span at residues 140-165 (WPAPCVIIASNIFVVAAFQIEKRLAV). The MBOAT fold stretch occupies residues 140-498 (WPAPCVIIAS…VLNYDAPVGV (359 aa)). Topologically, residues 166–170 (GALTE) are cytoplasmic. Residues 171–193 (QMGLLLHVVNLATIICFPAAVAL) form a helical membrane-spanning segment. The Lumenal portion of the chain corresponds to 194 to 200 (LVESITP). A helical transmembrane segment spans residues 201 to 232 (VGSVFALASYSIMFLKLYSYRDVNLWCRQRRV). The Cytoplasmic segment spans residues 233–284 (KAKAVSTGKKVSGAAAQQAVSYPDNLTYRDLYYFIFAPTLCYELNFPRSPRI). The tract at residues 235-287 (KAVSTGKKVSGAAAQQAVSYPDNLTYRDLYYFIFAPTLCYELNFPRSPRIRKR) is intracellular loop 1 (IL1). Residues 285-319 (RKRFLLRRVLEMLFFTQLQVGLIQQWMVPTIQNSM) form a helical membrane-spanning segment. Residues 320–326 (KPFKDMD) lie on the Lumenal side of the membrane. A helical membrane pass occupies residues 327–364 (YSRIIERLLKLAVPNHLIWLIFFYWFFHSCLNAVAELL). Residues 365–410 (QFGDREFYRDWWNAESVTYFWQNWNIPVHKWCIRHFYKPMLRHGSS) are Cytoplasmic-facing. The tract at residues 365 to 410 (QFGDREFYRDWWNAESVTYFWQNWNIPVHKWCIRHFYKPMLRHGSS) is intracellular loop 2 (IL2). The FYXDWWN motif signature appears at 371–377 (FYRDWWN). Residues 385-393 (WQNWNIPVH), Tyr-401, and Arg-415 each bind an acyl-CoA. Residues 391 to 405 (PVHKWCIRHFYKPML) form an amphipathic helix (AH) region. The helical transmembrane segment at 411-431 (KWVARTGVFLTSAFFHEYLVS) threads the bilayer. Residue His-426 is part of the active site. Topologically, residues 432–439 (VPLRMFRL) are lumenal. A helical transmembrane segment spans residues 440-458 (WAFTAMMAQVPLAWIVGRF). Topologically, residues 459–460 (FQ) are cytoplasmic. A helical membrane pass occupies residues 461 to 492 (GNYGNAAVWVTLIIGQPVAVLMYVHDYYVLNY). Tyr-488 provides a ligand contact to an acyl-CoA. Residues 493 to 498 (DAPVGV) lie on the Lumenal side of the membrane.

The protein belongs to the membrane-bound acyltransferase family. Sterol o-acyltransferase subfamily. In terms of assembly, homodimer or homotetramer; both forms have similar enzymatic activities.

The protein resides in the endoplasmic reticulum membrane. The catalysed reaction is an acyl-CoA + a 1,2-diacyl-sn-glycerol = a triacyl-sn-glycerol + CoA. It carries out the reaction all-trans-retinol + an acyl-CoA = an all-trans-retinyl ester + CoA. It catalyses the reaction 1-octadecanoyl-2-(5Z,8Z,11Z,14Z-eicosatetraenoyl)-sn-glycerol + (9Z)-octadecenoyl-CoA = 1-octadecanoyl-2-(5Z,8Z,11Z,14Z)-eicosatetraenoyl-3-(9Z)-octadecenoyl-sn-glycerol + CoA. The enzyme catalyses hexadecane-1,2-diol + 2 hexadecanoyl-CoA = 1,2-O,O-dihexadecanoyl-1,2-hexadecanediol + 2 CoA. The catalysed reaction is hexadecane-1,2-diol + hexadecanoyl-CoA = 2-hydroxyhexadecyl hexadecanoate + CoA. It carries out the reaction 2-(9Z-octadecenoyl)-glycerol + hexadecanoyl-CoA = 1-hexadecanoyl-2-(9Z-octadecenoyl)-sn-glycerol + CoA. It catalyses the reaction 1,2-di-(9Z-octadecenoyl)-sn-glycerol + hexadecanoyl-CoA = 1,2-di-(9Z)-octadecenoyl-3-hexadecanoyl-sn-glycerol + CoA. The enzyme catalyses hexadecan-1-ol + hexadecanoyl-CoA = hexadecanyl hexadecanoate + CoA. The catalysed reaction is all-trans-retinol + hexadecanoyl-CoA = all-trans-retinyl hexadecanoate + CoA. It carries out the reaction 13-cis-retinol + hexadecanoyl-CoA = 13-cis-retinyl hexadecanoate + CoA. It catalyses the reaction 1,2-di-(9Z-octadecenoyl)-sn-glycerol + (9Z)-octadecenoyl-CoA = 1,2,3-tri-(9Z-octadecenoyl)-glycerol + CoA. The enzyme catalyses 1,3-di-(9Z-octadecenoyl)-glycerol + (9Z)-octadecenoyl-CoA = 1,2,3-tri-(9Z-octadecenoyl)-glycerol + CoA. The catalysed reaction is 2,3-di-(9Z)-octadecenoyl-sn-glycerol + (9Z)-octadecenoyl-CoA = 1,2,3-tri-(9Z-octadecenoyl)-glycerol + CoA. It carries out the reaction 1-O-(9Z-octadecenyl)-glycerol + (9Z)-octadecenoyl-CoA = 1-O-(9Z-octadecyl)-3-(9Z-octadecenoyl)-glycerol + CoA. It catalyses the reaction 1-(9Z-octadecenoyl)-glycerol + (9Z)-octadecenoyl-CoA = 1,2-di-(9Z-octadecenoyl)-glycerol + CoA. The enzyme catalyses 2-(9Z-octadecenoyl)-glycerol + (9Z)-octadecenoyl-CoA = 1,2-di-(9Z-octadecenoyl)-sn-glycerol + CoA. The catalysed reaction is 1-O-(9Z-octadecyl)-3-(9Z-octadecenoyl)-glycerol + (9Z)-octadecenoyl-CoA = 1-O-(9Z-octadecenyl)-2,3-di-(9Z-octadecenoyl)glycerol + CoA. It carries out the reaction 1,2-di-(9Z-octadecenoyl)-glycerol + (9Z)-octadecenoate + H(+) = 1,2,3-tri-(9Z-octadecenoyl)-glycerol + H2O. It functions in the pathway lipid metabolism; glycerolipid metabolism. Functionally, catalyzes the terminal and only committed step in triacylglycerol synthesis by using diacylglycerol and fatty acyl CoA as substrates. Highly expressed in epithelial cells of the small intestine and its activity is essential for the absorption of dietary fats. In liver, plays a role in esterifying exogenous fatty acids to glycerol, and is required to synthesize fat for storage. Also present in female mammary glands, where it produces fat in the milk. May be involved in VLDL (very low density lipoprotein) assembly. In contrast to DGAT2 it is not essential for survival. Functions as the major acyl-CoA retinol acyltransferase (ARAT) in the skin, where it acts to maintain retinoid homeostasis and prevent retinoid toxicity leading to skin and hair disorders. Exhibits additional acyltransferase activities, includin acyl CoA:monoacylglycerol acyltransferase (MGAT), wax monoester and wax diester synthases. Also able to use 1-monoalkylglycerol (1-MAkG) as an acyl acceptor for the synthesis of monoalkyl-monoacylglycerol (MAMAG). In Mus musculus (Mouse), this protein is Diacylglycerol O-acyltransferase 1.